The sequence spans 307 residues: MKLIIATRKSQLALWQSEHVAQILKNTHQIEVLLEGFKTKGDVLLDSPLAKIGGKGLFTKELEESMLRKEAHLAVHSLKDVPSFFPQGLVLAAVSKREQSTDAMLSQNYKDFLSLPKGAKIGTTSLRRKMQLLLLRPDLEIISLRGNVNSRIEKLKNNEFDAIILAMAGIKRLNLDKQVNFVYEFSKDELIPAASQGALGIESIKDEKILELLKCLNDENALIETSIEREFIATLEGGCQVPIGINAELLGDEICVRAVLGLPDGSEILKDKRMIKKNDFKGFGEGLAKEFITKGAKELLKKAESII.

S-(dipyrrolylmethanemethyl)cysteine is present on Cys239.

This sequence belongs to the HMBS family. Monomer. It depends on dipyrromethane as a cofactor.

The enzyme catalyses 4 porphobilinogen + H2O = hydroxymethylbilane + 4 NH4(+). Its pathway is porphyrin-containing compound metabolism; protoporphyrin-IX biosynthesis; coproporphyrinogen-III from 5-aminolevulinate: step 2/4. Its function is as follows. Tetrapolymerization of the monopyrrole PBG into the hydroxymethylbilane pre-uroporphyrinogen in several discrete steps. This Campylobacter jejuni subsp. doylei (strain ATCC BAA-1458 / RM4099 / 269.97) protein is Porphobilinogen deaminase.